The sequence spans 493 residues: Non-cyanogenic beta-glucosidase (493 aa).

The first 18 residues, 1-18 (MDFIVAIFALFVISSFTI), serve as a signal peptide directing secretion. N-linked (GlcNAc...) asparagine glycosylation occurs at asparagine 34. Residues glutamine 54, histidine 158, and 203–204 (NE) contribute to the a beta-D-glucoside site. Glutamate 204 acts as the Proton donor in catalysis. An N-linked (GlcNAc...) asparagine glycan is attached at asparagine 335. Tyrosine 346 provides a ligand contact to a beta-D-glucoside. 2 N-linked (GlcNAc...) asparagine glycosylation sites follow: asparagine 371 and asparagine 412. A beta-D-glucoside contacts are provided by residues glutamate 422, tryptophan 471, 478–479 (EW), and phenylalanine 487. Glutamate 422 functions as the Nucleophile in the catalytic mechanism.

The protein belongs to the glycosyl hydrolase 1 family. Leaves.

It catalyses the reaction Hydrolysis of terminal, non-reducing beta-D-glucosyl residues with release of beta-D-glucose.. The protein is Non-cyanogenic beta-glucosidase of Trifolium repens (Creeping white clover).